The sequence spans 130 residues: Peptide methionine sulfoxide reductase MsrB (130 aa).

In terms of domain architecture, MsrB spans 1 to 122 (MKKREDMTEM…NSVSMAFEDS (122 aa)). Positions 39, 42, 88, and 91 each coordinate Zn(2+). Catalysis depends on cysteine 111, which acts as the Nucleophile.

This sequence belongs to the MsrB Met sulfoxide reductase family. It depends on Zn(2+) as a cofactor.

It carries out the reaction L-methionyl-[protein] + [thioredoxin]-disulfide + H2O = L-methionyl-(R)-S-oxide-[protein] + [thioredoxin]-dithiol. The protein is Peptide methionine sulfoxide reductase MsrB of Pasteurella multocida (strain Pm70).